The primary structure comprises 256 residues: uncharacterized protein (256 aa).

Positions 213–243 form a coiled coil; that stretch reads TMSMEAKLEAAKKTLEKFKQEAASKRAKRTK. A disordered region spans residues 231-256; that stretch reads KQEAASKRAKRTKPSGSKTTRSTGRK. The segment covering 244–256 has biased composition (polar residues); it reads PSGSKTTRSTGRK.

This is an uncharacterized protein from Acanthamoeba polyphaga (Amoeba).